Reading from the N-terminus, the 450-residue chain is Divalent metal cation transporter MntH (450 aa).

The next 11 helical transmembrane spans lie at Leu44–Trp64, Thr77–Ala97, Phe121–Gly141, Ile152–Met172, Ala181–Ala201, Ile218–Pro238, Ile273–Phe293, Leu310–Ala330, Gly366–Asp386, Leu387–Val407, and Phe419–Leu439.

The protein belongs to the NRAMP family.

The protein resides in the cell inner membrane. In terms of biological role, h(+)-stimulated, divalent metal cation uptake system. This is Divalent metal cation transporter MntH from Bradyrhizobium diazoefficiens (strain JCM 10833 / BCRC 13528 / IAM 13628 / NBRC 14792 / USDA 110).